The sequence spans 101 residues: Small ribosomal subunit protein uS14 (101 aa).

It belongs to the universal ribosomal protein uS14 family. As to quaternary structure, part of the 30S ribosomal subunit. Contacts proteins S3 and S10.

Binds 16S rRNA, required for the assembly of 30S particles and may also be responsible for determining the conformation of the 16S rRNA at the A site. The protein is Small ribosomal subunit protein uS14 of Methylibium petroleiphilum (strain ATCC BAA-1232 / LMG 22953 / PM1).